A 172-amino-acid polypeptide reads, in one-letter code: NADH-quinone oxidoreductase subunit B (172 aa).

[4Fe-4S] cluster contacts are provided by Cys46, Cys47, Cys111, and Cys141.

Belongs to the complex I 20 kDa subunit family. NDH-1 is composed of 14 different subunits. Subunits NuoB, C, D, E, F, and G constitute the peripheral sector of the complex. [4Fe-4S] cluster is required as a cofactor.

The protein resides in the cell membrane. The catalysed reaction is a quinone + NADH + 5 H(+)(in) = a quinol + NAD(+) + 4 H(+)(out). NDH-1 shuttles electrons from NADH, via FMN and iron-sulfur (Fe-S) centers, to quinones in the respiratory chain. The immediate electron acceptor for the enzyme in this species is believed to be a menaquinone. Couples the redox reaction to proton translocation (for every two electrons transferred, four hydrogen ions are translocated across the cytoplasmic membrane), and thus conserves the redox energy in a proton gradient. The polypeptide is NADH-quinone oxidoreductase subunit B (Bacillus cytotoxicus (strain DSM 22905 / CIP 110041 / 391-98 / NVH 391-98)).